The chain runs to 608 residues: 2',5'-phosphodiesterase 12 (608 aa).

The N-terminal 16 residues, 1–16 (MWRLPGRAALRGVRSV), are a transit peptide targeting the mitochondrion. Residues 91–111 (AKKSRKNRAHSSGGAACAATG) are disordered. Residues 100–111 (HSSGGAACAATG) show a composition bias toward low complexity. A Phosphoserine modification is found at S216. E350, D495, and N497 together coordinate Mg(2+). The Proton donor/acceptor role is filled by D495.

Belongs to the CCR4/nocturin family. Mg(2+) is required as a cofactor.

Its subcellular location is the mitochondrion matrix. The enzyme catalyses Exonucleolytic cleavage of poly(A) to 5'-AMP.. Functionally, enzyme that cleaves 2',5'-phosphodiester bond linking adenosines of the 5'-triphosphorylated oligoadenylates, triphosphorylated oligoadenylates referred as 2-5A modulates the 2-5A system. Degrades triphosphorylated 2-5A to produce AMP and ATP. Also cleaves 3',5'-phosphodiester bond of oligoadenylates. Plays a role as a negative regulator of the 2-5A system that is one of the major pathways for antiviral and antitumor functions induced by interferons (IFNs). Suppression of this enzyme increases cellular 2-5A levels and decreases viral replication in cultured small-airway epithelial cells. This is 2',5'-phosphodiesterase 12 (Pde12) from Rattus norvegicus (Rat).